Here is a 65-residue protein sequence, read N- to C-terminus: Putative beta-neurotoxin RjAa2 (65 aa).

Positions 1 to 64 (KEGYPMGRDG…VWDSSTNKCG (64 aa)) constitute an LCN-type CS-alpha/beta domain. 4 disulfide bridges follow: Cys-11–Cys-63, Cys-15–Cys-37, Cys-22–Cys-44, and Cys-26–Cys-46.

The protein belongs to the long (4 C-C) scorpion toxin superfamily. Sodium channel inhibitor family. Beta subfamily. In terms of tissue distribution, expressed by the venom gland.

The protein resides in the secreted. Functionally, beta toxins bind voltage-independently at site-4 of sodium channels (Nav) and shift the voltage of activation toward more negative potentials thereby affecting sodium channel activation and promoting spontaneous and repetitive firing. This Rhopalurus junceus (Caribbean blue scorpion) protein is Putative beta-neurotoxin RjAa2.